The chain runs to 413 residues: cAMP-dependent protein kinase regulatory subunit (413 aa).

The tract at residues 1–145 is disordered; sequence MADSSSFPGT…DSWTPPCHPK (145 aa). The tract at residues 24 to 161 is dimerization and phosphorylation; it reads SPIQKISEEE…RLKTAVSNNF (138 aa). Low complexity predominate over residues 58–67; that stretch reads GNSFNGDNGS. Residues 121–138 show a composition bias toward polar residues; it reads TSVSAESLNPTSAGSDSW. Ser122 carries the phosphoserine modification. Residues 162 to 291, Glu240, Arg249, 294 to 413, Glu361, and Arg370 each bind 3',5'-cyclic AMP; these read LFSH…FLEE and LLSS…PSPS.

This sequence belongs to the cAMP-dependent kinase regulatory chain family. In terms of assembly, tetramer, composed of 2 regulatory (R) and 2 catalytic (C) subunits. In the presence of cAMP it dissociates into 2 active monomeric C subunits and an R dimer.

The sequence is that of cAMP-dependent protein kinase regulatory subunit (pkaR) from Aspergillus fumigatus (strain ATCC MYA-4609 / CBS 101355 / FGSC A1100 / Af293) (Neosartorya fumigata).